Consider the following 201-residue polypeptide: Recombination protein RecR (201 aa).

The segment at cysteine 60–cysteine 75 adopts a C4-type zinc-finger fold. In terms of domain architecture, Toprim spans threonine 83–proline 178.

Belongs to the RecR family.

Functionally, may play a role in DNA repair. It seems to be involved in an RecBC-independent recombinational process of DNA repair. It may act with RecF and RecO. This is Recombination protein RecR from Methylobacterium radiotolerans (strain ATCC 27329 / DSM 1819 / JCM 2831 / NBRC 15690 / NCIMB 10815 / 0-1).